Consider the following 384-residue polypeptide: WD repeat-containing protein 74 (384 aa).

WD repeat units lie at residues 40 to 80 (RREE…FLSQ), 83 to 122 (CPGGEGTFRGLAQADGTLITCVDSGILRVWCENDKEASSD), 128 to 168 (KVGP…EPVF), 179 to 220 (DLRV…RRPV), 224 to 266 (TYGE…GCLK), and 267 to 306 (GLAGSVRGLQCHPSKPLLASCGLDRVLRIHRIRNPRGLEH). A Phosphoserine modification is found at serine 214. Position 311 is an N6-methyllysine (lysine 311). Residues 320-384 (SGRDNWEDEP…KKKRPGSTSP (65 aa)) are required for nucleolar and nuclear location. Residues 323–384 (DNWEDEPQEP…KKKRPGSTSP (62 aa)) form a disordered region. Basic residues predominate over residues 371–384 (QRRKKKKRPGSTSP).

Isoform 1 interacts (through WDR repeats) with NVL; the interaction is independent of RNA or pre-60S ribosome particles. Isoform 2 does not interact with NVL. Interacts with MTREX; the interaction dissociation in a late stage of rRNA synthesis is required for appropriate maturation of pre-60S particles and depends on the ATPase activity of NVL.

It is found in the nucleus. It localises to the nucleolus. Regulatory protein of the MTREX-exosome complex involved in the synthesis of the 60S ribosomal subunit. Participates in an early cleavage of the pre-rRNA processing pathway in cooperation with NVL. Required for blastocyst formation, is necessary for RNA transcription, processing and/or stability during preimplantation development. The chain is WD repeat-containing protein 74 (Wdr74) from Mus musculus (Mouse).